The sequence spans 357 residues: Elongation factor Ts (357 aa).

The interval 82–85 (TDFV) is involved in Mg(2+) ion dislocation from EF-Tu.

Belongs to the EF-Ts family.

It localises to the cytoplasm. Functionally, associates with the EF-Tu.GDP complex and induces the exchange of GDP to GTP. It remains bound to the aminoacyl-tRNA.EF-Tu.GTP complex up to the GTP hydrolysis stage on the ribosome. The polypeptide is Elongation factor Ts (Campylobacter jejuni subsp. jejuni serotype O:6 (strain 81116 / NCTC 11828)).